The primary structure comprises 280 residues: MSKAITDVFYTAFKTALPLTSSPLVQCITNEITVESMANALLYIDAKPVMADDQREFPEFFAQSDALLLNLGHISEVRQQNLLAAGKFAQATNQPTVIDLVGVSATQLRYDLGHQLLVNHPNVVKGNISEMRRFADLKSTGRGVDGSQLDQSVTALGELAASLQQLTQAFPTTTFLATGKIDLVVSAKGTWYLKNGVPQLDRFTGTGDIVGALIAALLGTGLDNDAAVVVAVSYFNCCGEVAAAQNRTGGLAAFREGTLNQLSLLAATADWLQMVKGEAL.

M50 contributes to the substrate binding site. Residues K125 and T178 each coordinate ATP. Position 205 (G205) interacts with substrate.

This sequence belongs to the Thz kinase family. Mg(2+) is required as a cofactor.

It carries out the reaction 5-(2-hydroxyethyl)-4-methylthiazole + ATP = 4-methyl-5-(2-phosphooxyethyl)-thiazole + ADP + H(+). The protein operates within cofactor biosynthesis; thiamine diphosphate biosynthesis; 4-methyl-5-(2-phosphoethyl)-thiazole from 5-(2-hydroxyethyl)-4-methylthiazole: step 1/1. In terms of biological role, catalyzes the phosphorylation of the hydroxyl group of 4-methyl-5-beta-hydroxyethylthiazole (THZ). This Lacticaseibacillus paracasei (strain ATCC 334 / BCRC 17002 / CCUG 31169 / CIP 107868 / KCTC 3260 / NRRL B-441) (Lactobacillus paracasei) protein is Hydroxyethylthiazole kinase.